The sequence spans 91 residues: Small ribosomal subunit protein bS20 (91 aa).

The span at 1-21 (MPLHKSAEKRLRQSARRNERN) shows a compositional bias: basic and acidic residues. Disordered stretches follow at residues 1-25 (MPLHKSAEKRLRQSARRNERNRARK) and 70-91 (PNKASRKKSQLSRMLNNYMKAE). Basic residues predominate over residues 70–79 (PNKASRKKSQ).

It belongs to the bacterial ribosomal protein bS20 family.

Functionally, binds directly to 16S ribosomal RNA. This chain is Small ribosomal subunit protein bS20, found in Chlorobium phaeobacteroides (strain BS1).